A 342-amino-acid polypeptide reads, in one-letter code: tRNA N6-adenosine threonylcarbamoyltransferase (342 aa).

Residues histidine 111 and histidine 115 each contribute to the Fe cation site. Residues 134–138 (LVSGG), aspartate 167, glycine 180, aspartate 184, and asparagine 273 each bind substrate. Position 298 (aspartate 298) interacts with Fe cation.

It belongs to the KAE1 / TsaD family. It depends on Fe(2+) as a cofactor.

It localises to the cytoplasm. It catalyses the reaction L-threonylcarbamoyladenylate + adenosine(37) in tRNA = N(6)-L-threonylcarbamoyladenosine(37) in tRNA + AMP + H(+). In terms of biological role, required for the formation of a threonylcarbamoyl group on adenosine at position 37 (t(6)A37) in tRNAs that read codons beginning with adenine. Is involved in the transfer of the threonylcarbamoyl moiety of threonylcarbamoyl-AMP (TC-AMP) to the N6 group of A37, together with TsaE and TsaB. TsaD likely plays a direct catalytic role in this reaction. The polypeptide is tRNA N6-adenosine threonylcarbamoyltransferase (Gloeobacter violaceus (strain ATCC 29082 / PCC 7421)).